A 170-amino-acid chain; its full sequence is MDLKNFIRNIDDFPKPGIDFKDVTTLFKDGDAFKYAVDSIVEELKDKDVDLVIGPEARGFLMGTPVAYALGVGFVPIRKPGKLPGEVESYEYGLEYGTDTLEIHKDAIKKGQKVAIVDDLLATGGTMEAAAKLVEKLGGEVVSMQFLIELKFLNGREKLSNYDVNSLIKY.

Belongs to the purine/pyrimidine phosphoribosyltransferase family. Homodimer.

Its subcellular location is the cytoplasm. It catalyses the reaction AMP + diphosphate = 5-phospho-alpha-D-ribose 1-diphosphate + adenine. The protein operates within purine metabolism; AMP biosynthesis via salvage pathway; AMP from adenine: step 1/1. Functionally, catalyzes a salvage reaction resulting in the formation of AMP, that is energically less costly than de novo synthesis. In Clostridioides difficile (strain 630) (Peptoclostridium difficile), this protein is Adenine phosphoribosyltransferase.